Consider the following 252-residue polypeptide: ATP synthase subunit a (252 aa).

6 helical membrane passes run 29–49 (FTNVSLFTVVTVVITAAFLFI), 87–107 (FFPLVFSLFTFILVANFIGLF), 117–137 (IMITFSLAMVVILTVIGYGFY), 146–166 (LFVPSGVPVVVLPLVTMIEII), 196–216 (FIVSMIGVGIVGVGGAVLPLI), and 219–239 (VAITALEFLVAFLQAYVFTVL).

Belongs to the ATPase A chain family. F-type ATPases have 2 components, CF(1) - the catalytic core - and CF(0) - the membrane proton channel. CF(1) has five subunits: alpha(3), beta(3), gamma(1), delta(1), epsilon(1). CF(0) has three main subunits: a(1), b(2) and c(9-12). The alpha and beta chains form an alternating ring which encloses part of the gamma chain. CF(1) is attached to CF(0) by a central stalk formed by the gamma and epsilon chains, while a peripheral stalk is formed by the delta and b chains.

It is found in the cell inner membrane. In terms of biological role, key component of the proton channel; it plays a direct role in the translocation of protons across the membrane. This Bartonella tribocorum (strain CIP 105476 / IBS 506) protein is ATP synthase subunit a.